The primary structure comprises 562 residues: Serine palmitoyltransferase 2 (562 aa).

The chain crosses the membrane as a helical span at residues 67-87; that stretch reads PMLVAVLTYVGYGVLTLFGYL. Lysine 379 bears the N6-(pyridoxal phosphate)lysine mark.

Belongs to the class-II pyridoxal-phosphate-dependent aminotransferase family. As to quaternary structure, component of the serine palmitoyltransferase (SPT) complex, which is composed of SPTLC1, SPTLC2 or SPTLC3 and SPTSSA or SPTSSB. The heterodimer consisting of SPTLC1 and SPTLC2/SPTLC3 forms the catalytic core of the enzyme, while SPTSSA or SPTSSB subunits determine substrate specificity. SPT also interacts with ORMDL proteins, especially ORMDL3, which negatively regulate SPT activity in the presence of ceramides. Forms dimers of heterodimers with SPTLC1. Pyridoxal 5'-phosphate serves as cofactor. As to expression, widely expressed.

The protein localises to the endoplasmic reticulum membrane. It carries out the reaction L-serine + hexadecanoyl-CoA + H(+) = 3-oxosphinganine + CO2 + CoA. The catalysed reaction is octadecanoyl-CoA + L-serine + H(+) = 3-oxoeicosasphinganine + CO2 + CoA. It participates in lipid metabolism; sphingolipid metabolism. SPT complex catalytic activity is negatively regulated by ORMDL proteins, including ORMDL3, in the presence of ceramides. This mechanism allows to maintain ceramide levels at sufficient concentrations for the production of complex sphingolipids, but which prevents the accumulation of ceramides to levels that trigger apoptosis. Component of the serine palmitoyltransferase multisubunit enzyme (SPT) that catalyzes the initial and rate-limiting step in sphingolipid biosynthesis by condensing L-serine and activated acyl-CoA (most commonly palmitoyl-CoA) to form long-chain bases. The SPT complex is composed of SPTLC1, SPTLC2 or SPTLC3 and SPTSSA or SPTSSB. Within this complex, the heterodimer consisting of SPTLC1 and SPTLC2/SPTLC3 forms the catalytic core. The composition of the serine palmitoyltransferase (SPT) complex determines the substrate preference. The SPTLC1-SPTLC2-SPTSSA complex shows a strong preference for C16-CoA substrate, while the SPTLC1-SPTLC3-SPTSSA isozyme uses both C14-CoA and C16-CoA as substrates, with a slight preference for C14-CoA. The SPTLC1-SPTLC2-SPTSSB complex shows a strong preference for C18-CoA substrate, while the SPTLC1-SPTLC3-SPTSSB isozyme displays an ability to use a broader range of acyl-CoAs, without apparent preference. Crucial for adipogenesis. The protein is Serine palmitoyltransferase 2 of Homo sapiens (Human).